Here is a 189-residue protein sequence, read N- to C-terminus: Segregation and condensation protein B (189 aa).

This sequence belongs to the ScpB family. In terms of assembly, homodimer. Homodimerization may be required to stabilize the binding of ScpA to the Smc head domains. Component of a cohesin-like complex composed of ScpA, ScpB and the Smc homodimer, in which ScpA and ScpB bind to the head domain of Smc. The presence of the three proteins is required for the association of the complex with DNA.

Its subcellular location is the cytoplasm. In terms of biological role, participates in chromosomal partition during cell division. May act via the formation of a condensin-like complex containing Smc and ScpA that pull DNA away from mid-cell into both cell halves. The chain is Segregation and condensation protein B from Clostridium tetani (strain Massachusetts / E88).